The sequence spans 100 residues: Nucleoid-associated protein Caur_0522 (100 aa).

It belongs to the YbaB/EbfC family. As to quaternary structure, homodimer.

The protein localises to the cytoplasm. The protein resides in the nucleoid. Binds to DNA and alters its conformation. May be involved in regulation of gene expression, nucleoid organization and DNA protection. The protein is Nucleoid-associated protein Caur_0522 of Chloroflexus aurantiacus (strain ATCC 29366 / DSM 635 / J-10-fl).